The chain runs to 138 residues: MAPKAAEKKPAEKKPAGKAPAEKLPKAEKKISKDAGGSEKKKKKSKKSVETYKIYIFKVLKQVHPDVGISGKAMGIMNSFINDIFEKLAQESSKLARYNKKPTITSREIQTAVRLVLPGELAKHAVSEGTKAVTKFTS.

The span at 1–39 (MAPKAAEKKPAEKKPAGKAPAEKLPKAEKKISKDAGGSE) shows a compositional bias: basic and acidic residues. Positions 1 to 48 (MAPKAAEKKPAEKKPAGKAPAEKLPKAEKKISKDAGGSEKKKKKSKKS) are disordered. Alanine 2 bears the N,N,N-trimethylalanine; alternate mark. N,N-dimethylalanine; alternate is present on alanine 2. N-methylalanine; alternate is present on alanine 2. Lysine 4 is subject to N6-methyllysine. Residues lysine 8 and lysine 13 each carry the N6-acetyllysine modification. An N6,N6-dimethyllysine modification is found at lysine 14. Lysine 18, lysine 23, lysine 29, and lysine 30 each carry N6-acetyllysine. A Glycyl lysine isopeptide (Lys-Gly) (interchain with G-Cter in ubiquitin) cross-link involves residue lysine 135.

Belongs to the histone H2B family. In terms of assembly, the nucleosome is a histone octamer containing two molecules each of H2A, H2B, H3 and H4 assembled in one H3-H4 heterotetramer and two H2A-H2B heterodimers. The octamer wraps approximately 147 bp of DNA. In terms of processing, can be acetylated to form H2BK6ac, H2BK33ac and H2BK34ac. Post-translationally, monoubiquitinated by BRE1 to form H2BK143ub1 and deubiquitinated by UBP26. Required for heterochromatic histone H3 di- and trimethylation at H3K4me. May give a specific tag for epigenetic transcriptional activation.

The protein resides in the nucleus. The protein localises to the chromosome. Functionally, core component of nucleosome. Nucleosomes wrap and compact DNA into chromatin, limiting DNA accessibility to the cellular machineries which require DNA as a template. Histones thereby play a central role in transcription regulation, DNA repair, DNA replication and chromosomal stability. DNA accessibility is regulated via a complex set of post-translational modifications of histones, also called histone code, and nucleosome remodeling. This is Histone H2B.4 from Arabidopsis thaliana (Mouse-ear cress).